The primary structure comprises 606 residues: Lysosomal cobalamin transporter ABCD4 (606 aa).

Residues 39–332 enclose the ABC transmembrane type-1 domain; that stretch reads NVLMFMTLLC…CFTQLIDLST (294 aa). 5 consecutive transmembrane segments (helical) span residues 43–63, 76–96, 190–210, 279–299, and 314–334; these read FMTLLCVTLLEQLVIYQVGLI, LDGFKALTLLAVTLIVLNSTL, IFGYFIVGTMVNKTLMGPIVT, YLGSILSYVVIAIPIFSGVYG, and AFVCIYLISCFTQLIDLSTTL. An ABC transporter domain is found at 389–603; that stretch reads LDRVSILAPS…GGGSWELTRI (215 aa). 421-428 lines the ATP pocket; the sequence is GNTGTGKT.

Belongs to the ABC transporter superfamily. ABCD family. Peroxisomal fatty acyl CoA transporter (TC 3.A.1.203) subfamily. Homodimer or heterodimer. Interacts with LMBRD1; this interaction induces the translocation of ABCD4 from the ER to the lysosome membrane. Interacts with LMBRD1 and MMACHC; this interaction ensures the transport of cobalamin from the lysosome to the cytosol.

It localises to the endoplasmic reticulum membrane. The protein localises to the lysosome membrane. The enzyme catalyses an R-cob(III)alamin(out) + ATP + H2O = an R-cob(III)alamin(in) + ADP + phosphate + H(+). Functionally, lysosomal membrane protein that transports cobalamin (Vitamin B12) from the lysosomal lumen to the cytosol in an ATP-dependent manner. Targeted by LMBRD1 lysosomal chaperone from the endoplasmic reticulum to the lysosomal membrane. Then forms a complex with lysosomal chaperone LMBRD1 and cytosolic MMACHC to transport cobalamin across the lysosomal membrane. This is Lysosomal cobalamin transporter ABCD4 from Mus musculus (Mouse).